We begin with the raw amino-acid sequence, 130 residues long: Small ribosomal subunit protein eS17 (130 aa).

Residues 74–84 (QEEERERRDNY) show a composition bias toward basic and acidic residues. Residues 74–97 (QEEERERRDNYMPEISTVDPSQLT) are disordered.

The protein belongs to the eukaryotic ribosomal protein eS17 family.

In Caenorhabditis elegans, this protein is Small ribosomal subunit protein eS17 (rps-17).